Reading from the N-terminus, the 553-residue chain is Coiled-coil domain-containing protein 22 homolog (553 aa).

Coiled coils occupy residues 261–404 (LEEL…TATQ) and 498–553 (NVTK…VAKA).

The protein belongs to the CCDC22 family.

The protein is Coiled-coil domain-containing protein 22 homolog of Drosophila pseudoobscura pseudoobscura (Fruit fly).